Here is a 140-residue protein sequence, read N- to C-terminus: L-fucose mutarotase (140 aa).

Catalysis depends on His22, which acts as the Proton donor. Substrate contacts are provided by residues Asp30, Arg107, and Tyr129–Asn131.

The protein belongs to the RbsD / FucU family. FucU mutarotase subfamily. In terms of assembly, homodecamer.

The protein localises to the cytoplasm. It carries out the reaction alpha-L-fucose = beta-L-fucose. Its pathway is carbohydrate metabolism; L-fucose metabolism. Its function is as follows. Involved in the anomeric conversion of L-fucose. This Klebsiella pneumoniae (strain 342) protein is L-fucose mutarotase.